We begin with the raw amino-acid sequence, 544 residues long: Chaperonin GroEL 2 (544 aa).

ATP contacts are provided by residues 30–33, 87–91, Gly415, 480–482, and Asp496; these read TLGP, DGTTT, and NAA.

This sequence belongs to the chaperonin (HSP60) family. Forms a cylinder of 14 subunits composed of two heptameric rings stacked back-to-back. Interacts with the co-chaperonin GroES.

The protein resides in the cytoplasm. It carries out the reaction ATP + H2O + a folded polypeptide = ADP + phosphate + an unfolded polypeptide.. Functionally, together with its co-chaperonin GroES, plays an essential role in assisting protein folding. The GroEL-GroES system forms a nano-cage that allows encapsulation of the non-native substrate proteins and provides a physical environment optimized to promote and accelerate protein folding. This is Chaperonin GroEL 2 from Albidiferax ferrireducens (strain ATCC BAA-621 / DSM 15236 / T118) (Rhodoferax ferrireducens).